Consider the following 926-residue polypeptide: Progesterone receptor (926 aa).

The segment at 1 to 48 (MTELQAKDPQVLHTSGASPSPPHIGSPLLARLDSGPFQGSQHSDVSSV) is disordered. The tract at residues 1–165 (MTELQAKDPQ…PATKGLLSPL (165 aa)) is AF3; mediates transcriptional activation (in isoform B). Positions 1–559 (MTELQAKDPQ…YGFDSLPQKI (559 aa)) are modulating, Pro-Rich. K7 is covalently cross-linked (Glycyl lysine isopeptide (Lys-Gly) (interchain with G-Cter in SUMO)). Position 20 is a phosphoserine (S20). The LXXL motif 1 signature appears at 56–60 (LDGLL). The residue at position 82 (S82) is a Phosphoserine. The LXXL motif 1 signature appears at 116–120 (LDSLL). 2 positions are modified to phosphoserine: S131 and S163. The segment at 166–305 (MSRPEIKAGD…LATTVVDFIH (140 aa)) is mediates transcriptional transrepression (in isoform A). Residues 168 to 256 (RPEIKAGDSS…GTGSGGGVAA (89 aa)) form a disordered region. The short motif at 184–188 (KVLPK) is the Nuclear localization signal element. Residues S191 and S214 each carry the phosphoserine modification. S294 carries the phosphoserine; by MAPK1 modification. Positions 327-364 (DSYDGGATAQGPFAPPRGSPSAPSPPVPCGDFPDCTYP) are disordered. Positions 339 to 354 (FAPPRGSPSAPSPPVP) are enriched in pro residues. S345 bears the Phosphoserine; by MAPK mark. K388 is covalently cross-linked (Glycyl lysine isopeptide (Lys-Gly) (interchain with G-Cter in SUMO); alternate). K388 is covalently cross-linked (Glycyl lysine isopeptide (Lys-Gly) (interchain with G-Cter in ubiquitin); alternate). Residues 391 to 447 (EEGADAAVRSPRPYLSAGASSSTFPDFPLAPAPQRAPSSRPGEAAVAGGPSSAAVSP) form a disordered region. S400 carries the post-translational modification Phosphoserine; by CDK2. Over residues 422–447 (APQRAPSSRPGEAAVAGGPSSAAVSP) the composition is skewed to low complexity. An AF1; mediates transcriptional activation region spans residues 453-539 (SALECILYKA…VYPPYLNYLR (87 aa)). Residue K524 forms a Glycyl lysine isopeptide (Lys-Gly) (interchain with G-Cter in SUMO) linkage. The segment at residues 557-632 (QKICLICGDE…AGMVLGGRKF (76 aa)) is a DNA-binding region (nuclear receptor). 2 NR C4-type zinc fingers span residues 560-580 (CLIC…CGSC) and 596-615 (CAGR…CPAC). At S669 the chain carries Phosphoserine. Positions 672–906 (QEIQLVPPLI…EFPEMMSEVI (235 aa)) constitute an NR LBD domain. The segment at 673-926 (EIQLVPPLIN…MVKPLLFHKK (254 aa)) is AF2; mediates transcriptional activation. R759 contacts progesterone.

Belongs to the nuclear hormone receptor family. NR3 subfamily. As to quaternary structure, interacts with SMARD1 and UNC45A. Interacts with CUEDC2; the interaction promotes ubiquitination, decreases sumoylation, and represses transcriptional activity. Interacts with PIAS3; the interaction promotes sumoylation of PR in a hormone-dependent manner, inhibits DNA-binding, and alters nuclear export. Interacts with SP1; the interaction requires ligand-induced phosphorylation on Ser-294 by ERK1/2 MAPK. Interacts with PRMT2. Isoform A interacts with NCOR2. Isoform B (but not isoform A) interacts with NCOA2 and NCOA1. Isoform B (but not isoform A) interacts with KLF9. Phosphorylated on multiple serine sites. Several of these sites are hormone-dependent. Phosphorylation on Ser-294 is highly hormone-dependent and modulates ubiquitination and sumoylation on Lys-388. Phosphorylation on Ser-345 also requires induction by hormone. Basal phosphorylation on Ser-82, Ser-163, Ser-191 and Ser-400 is increased in response to progesterone and can be phosphorylated in vitro by the CDK2-A1 complex. Increased levels of phosphorylation on Ser-400 also in the presence of EGF, heregulin, IGF, PMA and FBS. Phosphorylation at this site by CDK2 is ligand-independent, and increases nuclear translocation and transcriptional activity. Phosphorylation at Ser-163 and Ser-294, but not at Ser-191, is impaired during the G(2)/M phase of the cell cycle. Phosphorylation on Ser-345 by ERK1/2 MAPK is required for interaction with SP1. In terms of processing, sumoylation is hormone-dependent and represses transcriptional activity. Sumoylation on all three sites is enhanced by PIAS3. Desumoylated by SENP1. Sumoylation on Lys-388, the main site of sumoylation, is repressed by ubiquitination on the same site, and modulated by phosphorylation at Ser-294. Post-translationally, ubiquitination is hormone-dependent and represses sumoylation on the same site. Promoted by MAPK-mediated phosphorylation on Ser-294. Ubiquitinated by UBR5, leading to its degradation: UBR5 specifically recognizes and binds ligand-bound PGR when it is not associated with coactivators (NCOAs). In presence of NCOAs, the UBR5-degron is not accessible, preventing its ubiquitination and degradation. Palmitoylated by ZDHHC7 and ZDHHC21. Palmitoylation is required for plasma membrane targeting and for rapid intracellular signaling via ERK and AKT kinases and cAMP generation. As to expression, expression of isoform A and isoform B in mammary epithelial cells is temporally and spatially separated during normal mammary gland development. Isoform A and isoform B are expressed in the pituitary. Isoform A and isoform B are differentially expressed in the ovary and oviduct, and the level of expression is dependent on both the cell type and estrous cycle stage.

Its subcellular location is the nucleus. It is found in the cytoplasm. In terms of biological role, the steroid hormones and their receptors are involved in the regulation of eukaryotic gene expression and affect cellular proliferation and differentiation in target tissues. Depending on the isoform, progesterone receptor functions as a transcriptional activator or repressor. Functionally, ligand-dependent transdominant repressor of steroid hormone receptor transcriptional activity including repression of its isoform B, MR and ER. Transrepressional activity may involve recruitment of corepressor NCOR2. Its function is as follows. Transcriptional activator of several progesteron-dependent promoters in a variety of cell types. Involved in activation of SRC-dependent MAPK signaling on hormone stimulation. The chain is Progesterone receptor (Pgr) from Mus musculus (Mouse).